Consider the following 146-residue polypeptide: Large ribosomal subunit protein uL22 (146 aa).

The tract at residues 1–39 is disordered; sequence MAETQTTTPKKKAERRAPPPARARKNRPAAPAPGPHASL.

This sequence belongs to the universal ribosomal protein uL22 family. Part of the 50S ribosomal subunit.

This protein binds specifically to 23S rRNA; its binding is stimulated by other ribosomal proteins, e.g. L4, L17, and L20. It is important during the early stages of 50S assembly. It makes multiple contacts with different domains of the 23S rRNA in the assembled 50S subunit and ribosome. Functionally, the globular domain of the protein is located near the polypeptide exit tunnel on the outside of the subunit, while an extended beta-hairpin is found that lines the wall of the exit tunnel in the center of the 70S ribosome. This chain is Large ribosomal subunit protein uL22, found in Anaeromyxobacter dehalogenans (strain 2CP-1 / ATCC BAA-258).